The following is a 331-amino-acid chain: tRNA uridine(34) hydroxylase (331 aa).

One can recognise a Rhodanese domain in the interval 123–217; that stretch reads TDPEVLLIDT…YLEDVPQEES (95 aa). Catalysis depends on Cys177, which acts as the Cysteine persulfide intermediate. A disordered region spans residues 293-331; the sequence is KSRGEEHIGSEAAKAIKKRQAEKKLKRKNYHQHLTQGAE. Positions 307–323 are enriched in basic residues; the sequence is AIKKRQAEKKLKRKNYH.

It belongs to the TrhO family.

The catalysed reaction is uridine(34) in tRNA + AH2 + O2 = 5-hydroxyuridine(34) in tRNA + A + H2O. Its function is as follows. Catalyzes oxygen-dependent 5-hydroxyuridine (ho5U) modification at position 34 in tRNAs. In Hahella chejuensis (strain KCTC 2396), this protein is tRNA uridine(34) hydroxylase.